The chain runs to 1062 residues: Integrin alpha-8 (1062 aa).

The signal sequence occupies residues 1–35; sequence MSAGTHCGPPGNRAPPFARLCCVSAALGMLWSPAC. Residues 36–1010 are Extracellular-facing; the sequence is LAFNLDVDKL…ATPNVSFSIP (975 aa). FG-GAP repeat units lie at residues 41 to 104, 121 to 182, 187 to 239, 252 to 305, 306 to 371, 372 to 430, and 434 to 497; these read DVDK…RSAQ, NGTK…AYAE, RNSN…IANY, KQTD…STDM, TFIQ…LLFQ, DPQV…GLHS, and QVLQ…LHPM. A glycan (N-linked (GlcNAc...) asparagine) is linked at asparagine 80. Cysteine 95 and cysteine 105 are oxidised to a cystine. N-linked (GlcNAc...) asparagine glycosylation occurs at asparagine 121. Cysteine 149 and cysteine 170 are disulfide-bonded. An N-linked (GlcNAc...) asparagine glycan is attached at asparagine 176. Cysteine 186 and cysteine 199 are oxidised to a cystine. Asparagine 238 carries N-linked (GlcNAc...) asparagine glycosylation. Ca(2+) contacts are provided by glutamate 274, threonine 276, aspartate 278, and glutamate 282. 2 N-linked (GlcNAc...) asparagine glycosylation sites follow: asparagine 301 and asparagine 310. Ca(2+)-binding residues include aspartate 328, asparagine 330, aspartate 332, aspartate 336, aspartate 394, asparagine 396, aspartate 398, tyrosine 400, and aspartate 402. A Cell attachment site motif is present at residues 454–456; the sequence is RGD. Aspartate 458, aspartate 460, asparagine 462, tyrosine 464, and aspartate 466 together coordinate Ca(2+). Residue asparagine 503 is glycosylated (N-linked (GlcNAc...) asparagine). Disulfide bonds link cysteine 506-cysteine 517 and cysteine 523-cysteine 579. Residues asparagine 600 and asparagine 604 are each glycosylated (N-linked (GlcNAc...) asparagine). Intrachain disulfides connect cysteine 640/cysteine 646 and cysteine 712/cysteine 725. N-linked (GlcNAc...) asparagine glycans are attached at residues asparagine 718, asparagine 736, asparagine 752, asparagine 779, asparagine 895, and asparagine 922. 2 disulfide bridges follow: cysteine 866/cysteine 923 and cysteine 928/cysteine 933. Asparagine 1004 carries an N-linked (GlcNAc...) asparagine glycan. A helical transmembrane segment spans residues 1011–1031; that stretch reads LWVIILAILLGLLVLAILTLA. At 1032-1062 the chain is on the cytoplasmic side; that stretch reads LWKCGFFDRARPPQDEMTDREQLTSDKTPEA.

Belongs to the integrin alpha chain family. As to quaternary structure, heterodimer of an alpha and a beta subunit. The alpha subunit is composed of a heavy and a light chain linked by a disulfide bond. Alpha-8 associates with beta-1. As to expression, in brain, expressed in deep cortex, hippocampal CA1, basolateral amygdala and striatum. In kidney, expressed in glomerular mesengium (at protein level).

The protein localises to the membrane. It is found in the cell membrane. In terms of biological role, integrin alpha-8/beta-1 functions in the genesis of kidney and probably of other organs by regulating the recruitment of mesenchymal cells into epithelial structures. It recognizes the sequence R-G-D in a wide array of ligands including TNC, FN1, SPP1 TGFB1, TGFB3 and VTN. NPNT is probably its functional ligand in kidney genesis. Neuronal receptor for TNC it mediates cell-cell interactions and regulates neurite outgrowth of sensory and motor neurons. This is Integrin alpha-8 (Itga8) from Mus musculus (Mouse).